Here is a 181-residue protein sequence, read N- to C-terminus: MSFVPTKVFFTKGVGRHKEYLSSFELALRDAKIEKCNLVTVSSIFPPKCERISVEEGIKLLTPGQITFAVMARNSTNEYNRLMAASIGVAIPADDTQYGYLSEHHPFGEDEEQSGEYAEDLAATMLATTLGIEFDPNKDWDEREGIYKMSGKIINSYNITQSAEGENGLWTTVISCAVLLP.

A Pyruvic acid (Ser) modification is found at Ser43.

This sequence belongs to the PdaD family. The cofactor is pyruvate.

The enzyme catalyses L-arginine + H(+) = agmatine + CO2. The polypeptide is Probable pyruvoyl-dependent arginine decarboxylase (Chlorobium phaeovibrioides (strain DSM 265 / 1930) (Prosthecochloris vibrioformis (strain DSM 265))).